The sequence spans 180 residues: Acireductone dioxygenase (180 aa).

H97, H99, E103, and H141 together coordinate Fe(2+). Ni(2+) is bound by residues H97, H99, E103, and H141.

The protein belongs to the acireductone dioxygenase (ARD) family. Monomer. It depends on Fe(2+) as a cofactor. Ni(2+) is required as a cofactor.

The enzyme catalyses 1,2-dihydroxy-5-(methylsulfanyl)pent-1-en-3-one + O2 = 3-(methylsulfanyl)propanoate + CO + formate + 2 H(+). It carries out the reaction 1,2-dihydroxy-5-(methylsulfanyl)pent-1-en-3-one + O2 = 4-methylsulfanyl-2-oxobutanoate + formate + 2 H(+). It functions in the pathway amino-acid biosynthesis; L-methionine biosynthesis via salvage pathway; L-methionine from S-methyl-5-thio-alpha-D-ribose 1-phosphate: step 5/6. Functionally, catalyzes 2 different reactions between oxygen and the acireductone 1,2-dihydroxy-3-keto-5-methylthiopentene (DHK-MTPene) depending upon the metal bound in the active site. Fe-containing acireductone dioxygenase (Fe-ARD) produces formate and 2-keto-4-methylthiobutyrate (KMTB), the alpha-ketoacid precursor of methionine in the methionine recycle pathway. Ni-containing acireductone dioxygenase (Ni-ARD) produces methylthiopropionate, carbon monoxide and formate, and does not lie on the methionine recycle pathway. The chain is Acireductone dioxygenase from Cronobacter sakazakii (Enterobacter sakazakii).